Consider the following 472-residue polypeptide: Adenosylhomocysteinase (472 aa).

Residues T63, D138, and E198 each coordinate substrate. Residue 199 to 201 (TTT) coordinates NAD(+). Residues K228 and D232 each contribute to the substrate site. Residues N233, 262-267 (GYGDVG), E285, N320, 341-343 (IGH), and N386 each bind NAD(+).

Belongs to the adenosylhomocysteinase family. NAD(+) is required as a cofactor.

It localises to the cytoplasm. It catalyses the reaction S-adenosyl-L-homocysteine + H2O = L-homocysteine + adenosine. Its pathway is amino-acid biosynthesis; L-homocysteine biosynthesis; L-homocysteine from S-adenosyl-L-homocysteine: step 1/1. In terms of biological role, may play a key role in the regulation of the intracellular concentration of adenosylhomocysteine. The protein is Adenosylhomocysteinase of Methylococcus capsulatus (strain ATCC 33009 / NCIMB 11132 / Bath).